The chain runs to 307 residues: Ribosomal RNA small subunit methyltransferase H (307 aa).

Residues 31 to 33 (GGH), Asp51, Tyr83, Asp97, and Gln104 each bind S-adenosyl-L-methionine.

It belongs to the methyltransferase superfamily. RsmH family.

It localises to the cytoplasm. The catalysed reaction is cytidine(1402) in 16S rRNA + S-adenosyl-L-methionine = N(4)-methylcytidine(1402) in 16S rRNA + S-adenosyl-L-homocysteine + H(+). Specifically methylates the N4 position of cytidine in position 1402 (C1402) of 16S rRNA. In Buchnera aphidicola subsp. Cinara cedri (strain Cc), this protein is Ribosomal RNA small subunit methyltransferase H.